Consider the following 623-residue polypeptide: Chaperone protein HtpG (623 aa).

The interval 1–328 is a; substrate-binding; that stretch reads MTQEKKKFDA…SEDLPLNISR (328 aa). Residues 329 to 544 form a b region; that stretch reads ESLQHNSILD…ESAMDIRMER (216 aa). Positions 545–623 are c; sequence FLIEQKQIAN…DIVQKAILSL (79 aa).

It belongs to the heat shock protein 90 family. Homodimer.

The protein localises to the cytoplasm. In terms of biological role, molecular chaperone. Has ATPase activity. The protein is Chaperone protein HtpG of Rickettsia canadensis (strain McKiel).